The primary structure comprises 60 residues: SKEGMSYEEPENDEGVACTGQYAESFCLNGGTCRYIQSIGEYYCICVGDYTGHRCEKKQV.

Positions 1-6 (SKEGMS) are cleaved as a signal peptide. A propeptide spanning residues 7–12 (YEEPEN) is cleaved from the precursor. The 43-residue stretch at 14–56 (EGVACTGQYAESFCLNGGTCRYIQSIGEYYCICVGDYTGHRCE) folds into the EGF-like domain. Disulfide bonds link Cys-18/Cys-33, Cys-27/Cys-44, and Cys-46/Cys-55.

This sequence belongs to the EGF domain peptide family.

The protein resides in the secreted. The protein localises to the nematocyst. Functionally, has both toxic and EGF activity. Its EGF activity consists of rounding cells (morphological change) and inducing tyrosine phosphorylation of the EGFR in A431 cells, but with a lower potency that human EGF. The protein is U-actitoxin-Avd12b of Anemonia viridis (Snakelocks anemone).